The following is a 283-amino-acid chain: Peflin (283 aa).

A run of 8 repeats spans residues 21 to 30 (PQTNYYGGQQ), 36 to 44 (QPAASYGRP), 45 to 54 (APGAPYGSPP), 55 to 62 (SGGVYGHP), 71 to 79 (APGGPYGGQ), 80 to 87 (APGGPYSV), 88 to 95 (PGSTPYGS), and 96 to 104 (QQHGSYGQG). The 8 X 9 AA approximate tandem repeat of [AP]-P-G-G-P-Y-G-G-P-P stretch occupies residues 21–104 (PQTNYYGGQQ…SQQHGSYGQG (84 aa)). The segment covering 37–70 (PAASYGRPAPGAPYGSPPSGGVYGHPVPGSAAPG) has biased composition (low complexity). A disordered region spans residues 37-113 (PAASYGRPAP…GAPAGNIPPG (77 aa)). The segment covering 71–81 (APGGPYGGQAP) has biased composition (gly residues). Residues 93 to 104 (YGSQQHGSYGQG) are compositionally biased toward low complexity. 5 consecutive EF-hand domains span residues 113-148 (GVDP…TNWS), 154-179 (TCTM…SALW), 180-215 (RFIQ…MGYQ), 216-252 (LSPQ…LQSM), and 253-282 (TEAF…TTRL). Residues aspartate 126, aspartate 128, serine 130, tyrosine 132, and glutamate 137 each coordinate Ca(2+). Residues aspartate 193, aspartate 195, serine 197, serine 199, and glutamate 204 each coordinate Ca(2+).

Heterodimer; heterodimerizes (via the EF-hand 5) with pdcd6.

Its subcellular location is the cytoplasm. It is found in the endoplasmic reticulum. It localises to the membrane. The protein resides in the cytoplasmic vesicle. The protein localises to the COPII-coated vesicle membrane. Its function is as follows. Calcium-binding protein that acts as an adapter that bridges unrelated proteins or stabilizes weak protein-protein complexes in response to calcium. Acts as a negative regulator of ER-Golgi transport. This Xenopus laevis (African clawed frog) protein is Peflin.